A 146-amino-acid polypeptide reads, in one-letter code: MGEDGKLYIIREEILSDSLKKTLKVKELLESGKVKTINEAVKQVGISRSAFYKYRDYVFPFSKFSKGKIITLSMVLDHMPGVLSSILDVVANARGNVVTINQSMPSMGVASVTISIDTQYMEMSLENFLEKLSSQNGVRKIEILGE.

Positions Thr-71–Glu-146 constitute an ACT domain.

It belongs to the UPF0735 family.

This Thermoanaerobacter sp. (strain X514) protein is UPF0735 ACT domain-containing protein Teth514_2312.